The chain runs to 213 residues: MSDLDDSFAKLLGRQPSDAERQSLYRVRDALGLKNNDALWLVLMALQHYQGQYEKFPQAIAQAAKDTLVNFKVTADATVKASAEAAKADLAQAVAAAAQEVAHNTSAKQMWQWAAGCIAVAFLCVGLFGWYMHSSGKDSGYQAGYGAGYTEAKDEKAAAAWANTPEGRTAYRFAQSGELQRLARCSGKGWKVEKGACYPYPVANEGTYGWALP.

The polypeptide is Protein MobE (mobE) (Acidithiobacillus ferrooxidans (Thiobacillus ferrooxidans)).